Reading from the N-terminus, the 183-residue chain is Translocon-associated protein subunit beta (183 aa).

A signal peptide spans 1-17; the sequence is MRLLAFAVLALFAVTQA. Residues 18–146 lie on the Lumenal side of the membrane; the sequence is EEGARLLASK…REFDRRFSPH (129 aa). N-linked (GlcNAc...) asparagine glycosylation occurs at Asn-88. The chain crosses the membrane as a helical span at residues 147–167; that stretch reads FLDWAAFGVMTLPSIGVPLLL. Over 168–183 the chain is Cytoplasmic; the sequence is WYSSKRKYDTPKTKKN.

The protein belongs to the TRAP-beta family. In terms of assembly, heterotetramer of TRAP-alpha, TRAP-beta, TRAP-delta and TRAP-gamma. Interacts with STING1.

The protein resides in the endoplasmic reticulum membrane. In terms of biological role, TRAP proteins are part of a complex whose function is to bind calcium to the ER membrane and thereby regulate the retention of ER resident proteins. The protein is Translocon-associated protein subunit beta (SSR2) of Bos taurus (Bovine).